The sequence spans 62 residues: Excisionase (62 aa).

This Streptomyces ambofaciens protein is Excisionase (xis).